The chain runs to 270 residues: uncharacterized protein (270 aa).

10 helical membrane passes run 12 to 32 (AAIV…RNVG), 35 to 55 (TLSV…PFCL), 64 to 84 (TLLG…AAIQ), 88 to 108 (VAMA…LSVL), 117 to 137 (TLLA…PYAE), 138 to 158 (LTFG…VFVL), 171 to 191 (ITFY…LMFG), 194 to 214 (GSWL…FVLF), 226 to 246 (APIL…FYFG), and 248 to 268 (TLTL…LIAW). 2 EamA domains span residues 19–133 (VLMG…LMLT) and 150–269 (LSYA…IAWR).

The protein belongs to the EamA transporter family.

It is found in the cell membrane. This is an uncharacterized protein from Archaeoglobus fulgidus (strain ATCC 49558 / DSM 4304 / JCM 9628 / NBRC 100126 / VC-16).